Here is a 418-residue protein sequence, read N- to C-terminus: Tryptophan synthase beta chain (418 aa).

Polar residues predominate over residues 1–17 (MTSTLPNASTPDPSSLQ). A disordered region spans residues 1-23 (MTSTLPNASTPDPSSLQPAVRPG). K111 carries the post-translational modification N6-(pyridoxal phosphate)lysine.

The protein belongs to the TrpB family. As to quaternary structure, tetramer of two alpha and two beta chains. Pyridoxal 5'-phosphate is required as a cofactor.

It catalyses the reaction (1S,2R)-1-C-(indol-3-yl)glycerol 3-phosphate + L-serine = D-glyceraldehyde 3-phosphate + L-tryptophan + H2O. It participates in amino-acid biosynthesis; L-tryptophan biosynthesis; L-tryptophan from chorismate: step 5/5. The beta subunit is responsible for the synthesis of L-tryptophan from indole and L-serine. This Synechococcus sp. (strain CC9605) protein is Tryptophan synthase beta chain.